The chain runs to 750 residues: E3 ubiquitin-protein ligase rfwd3.S (750 aa).

The tract at residues 92–206 (RQAAEQRSSV…GAAPPAEPAP (115 aa)) is disordered. Residues 105–116 (RVQRRSTRRHQR) show a composition bias toward basic residues. A compositionally biased stretch (polar residues) spans 122–144 (TAGTSSRAALSNFFQINRTQGVA). Acidic residues predominate over residues 168–181 (SSDETVELSEEEEG). An RING-type; degenerate zinc finger spans residues 263 to 307 (CAICFEPWTNAGQHRLSALRCGHLFGFTCIERWLKGGAAKCPQCN). Positions 387-405 (TSMQASSSRSTISGSLSSS) are enriched in low complexity. Positions 387 to 406 (TSMQASSSRSTISGSLSSSQ) are disordered. WD repeat units follow at residues 470-510 (IHSK…VVQT), 512-552 (NTGR…NCVQ), and 558-603 (GSRC…YRPH).

The cofactor is [4Fe-4S] cluster.

It localises to the nucleus. It is found in the PML body. Its subcellular location is the cytoplasm. The catalysed reaction is S-ubiquitinyl-[E2 ubiquitin-conjugating enzyme]-L-cysteine + [acceptor protein]-L-lysine = [E2 ubiquitin-conjugating enzyme]-L-cysteine + N(6)-ubiquitinyl-[acceptor protein]-L-lysine.. The protein operates within protein modification; protein ubiquitination. E3 ubiquitin-protein ligase required for the repair of DNA interstrand cross-links (ICL) in response to DNA damage. Plays a key role in RPA-mediated DNA damage signaling and repair. Required to translesion DNA synthesis across DNA-protein cross-link adducts by catalyzing ubiquitination of proteins on single-stranded DNA (ssDNA). Mediates ubiquitination of the hmces DNA-protein cross-link, possibly promoting its degradation. The sequence is that of E3 ubiquitin-protein ligase rfwd3.S (rfwd3.S) from Xenopus laevis (African clawed frog).